The primary structure comprises 730 residues: Catalase-peroxidase 1 (730 aa).

The tract at residues 1 to 24 is disordered; sequence MQEKGKCPVTGMTKHKTSGGTTNQ. The tryptophyl-tyrosyl-methioninium (Trp-Tyr) (with M-244) cross-link spans 95 to 218; that stretch reads WHSAGTYRMG…LAAVQMGLIY (124 aa). The Proton acceptor role is filled by H96. A cross-link (tryptophyl-tyrosyl-methioninium (Tyr-Met) (with W-95)) is located at residues 218-244; it reads YVNPEGPNGQPSALASGKDIRDTFARM. A heme b-binding site is contributed by H259.

It belongs to the peroxidase family. Peroxidase/catalase subfamily. As to quaternary structure, homodimer or homotetramer. The cofactor is heme b. In terms of processing, formation of the three residue Trp-Tyr-Met cross-link is important for the catalase, but not the peroxidase activity of the enzyme.

The catalysed reaction is H2O2 + AH2 = A + 2 H2O. The enzyme catalyses 2 H2O2 = O2 + 2 H2O. In terms of biological role, bifunctional enzyme with both catalase and broad-spectrum peroxidase activity. In Alkaliphilus metalliredigens (strain QYMF), this protein is Catalase-peroxidase 1.